The sequence spans 205 residues: GTP cyclohydrolase-2 (205 aa).

Arginine 49–glutamate 53 is a GTP binding site. Cysteine 54, cysteine 65, and cysteine 67 together coordinate Zn(2+). Residues glutamine 70, glutamate 92 to arginine 94, and threonine 114 contribute to the GTP site. Aspartate 126 functions as the Proton acceptor in the catalytic mechanism. The Nucleophile role is filled by arginine 128. Positions 149 and 154 each coordinate GTP.

It belongs to the GTP cyclohydrolase II family. The cofactor is Zn(2+).

The catalysed reaction is GTP + 4 H2O = 2,5-diamino-6-hydroxy-4-(5-phosphoribosylamino)-pyrimidine + formate + 2 phosphate + 3 H(+). Its pathway is cofactor biosynthesis; riboflavin biosynthesis; 5-amino-6-(D-ribitylamino)uracil from GTP: step 1/4. Its function is as follows. Catalyzes the conversion of GTP to 2,5-diamino-6-ribosylamino-4(3H)-pyrimidinone 5'-phosphate (DARP), formate and pyrophosphate. The sequence is that of GTP cyclohydrolase-2 from Pseudomonas putida (strain W619).